We begin with the raw amino-acid sequence, 202 residues long: dTTP/UTP pyrophosphatase (202 aa).

The active-site Proton acceptor is the Asp76.

The protein belongs to the Maf family. YhdE subfamily. The cofactor is a divalent metal cation.

The protein localises to the cytoplasm. The catalysed reaction is dTTP + H2O = dTMP + diphosphate + H(+). The enzyme catalyses UTP + H2O = UMP + diphosphate + H(+). Its function is as follows. Nucleoside triphosphate pyrophosphatase that hydrolyzes dTTP and UTP. May have a dual role in cell division arrest and in preventing the incorporation of modified nucleotides into cellular nucleic acids. The chain is dTTP/UTP pyrophosphatase from Neisseria gonorrhoeae (strain ATCC 700825 / FA 1090).